A 684-amino-acid chain; its full sequence is MLRNSIAPSRGLGSLARQRLTTSGRNLITKRSYVKGKSAAWPPGRSIASVLPARKTSCATFTTSATRGNEQNIRSPPSPSSASAISPEGISKPASSSPAGQTSPGSSVNSPEPPKAQTSAPPPPPPPPPPAPKAKGRFGRSLLYLVLTAGVAYAGGVWFSLRSDNFHDFFTEYVPYGEEAVLYFEELDFRRRFPNATRHINTRPAAPRDEGEKVTIPSKSGVSWKVAENEGTSDVTHKGRHMSAVDAEVPRTGGDAKSAPNKPTTEDKKDSEKTGSKKDESKERVPVTDTKKSTVSLDEPRKPAVATVASIEPLASLQDDPIIQELTKIVNGLIAVINADESASKLAAPIAKAKDDFLKLGEQISSIKKEAHAAAQEEIKNAHKEFERSATELVRRIDEVRSEEAAEYREEFETEREKLANSYQEKIKTEVERANAVAEQRLRNELVEQAIELNRKFLSDVDTLVEKERQGRFSKLSELSAQVAELEKLTAGWNEVIGANLTTQQLQVAVDAVHSALESESMPRPFINELLAVKSLAGQDPIVNAAISSINPTAYQRGIPSTAQIIDRFRRVANEVRKASLLPEDAGVASHATSYLMSKVMFKKEASSSGDDVESILTRTEKLLEQGNLDDAAREMNALRGWSKLLSKDWLADVRRVLEVRQALEVCFLSLLPTLSLLIYYNEC.

The N-terminal 11 residues, 1 to 11 (MLRNSIAPSRG), are a transit peptide targeting the mitochondrion. At 12–140 (LGSLARQRLT…APKAKGRFGR (129 aa)) the chain is on the mitochondrial matrix side. Polar residues-rich tracts occupy residues 61-74 (FTTS…QNIR) and 93-110 (PASS…SVNS). The interval 61–135 (FTTSATRGNE…PPPPPAPKAK (75 aa)) is disordered. Residues 120 to 132 (APPPPPPPPPPAP) show a composition bias toward pro residues. A helical transmembrane segment spans residues 141–161 (SLLYLVLTAGVAYAGGVWFSL). Over 162-684 (RSDNFHDFFT…LSLLIYYNEC (523 aa)) the chain is Mitochondrial intermembrane. Residues 200–301 (INTRPAAPRD…KSTVSLDEPR (102 aa)) are disordered. Positions 264–301 (TTEDKKDSEKTGSKKDESKERVPVTDTKKSTVSLDEPR) are enriched in basic and acidic residues. Positions 367–445 (IKKEAHAAAQ…AVAEQRLRNE (79 aa)) form a coiled coil.

Belongs to the MICOS complex subunit Mic60 family. Component of the mitochondrial contact site and cristae organizing system (MICOS) complex.

It is found in the mitochondrion inner membrane. Functionally, component of the MICOS complex, a large protein complex of the mitochondrial inner membrane that plays crucial roles in the maintenance of crista junctions, inner membrane architecture, and formation of contact sites to the outer membrane. Plays a role in keeping cristae membranes connected to the inner boundary membrane. Also promotes protein import via the mitochondrial intermembrane space assembly (MIA) pathway. The chain is MICOS complex subunit MIC60 (MIC60) from Arthroderma benhamiae (strain ATCC MYA-4681 / CBS 112371) (Trichophyton mentagrophytes).